Here is a 1216-residue protein sequence, read N- to C-terminus: DNA-directed RNA polymerase subunit beta' (1216 aa).

Positions 60, 62, 75, and 78 each coordinate Zn(2+). Mg(2+) is bound by residues aspartate 450, aspartate 452, and aspartate 454. Cysteine 819, cysteine 893, cysteine 900, and cysteine 903 together coordinate Zn(2+).

It belongs to the RNA polymerase beta' chain family. As to quaternary structure, the RNAP catalytic core consists of 2 alpha, 1 beta, 1 beta' and 1 omega subunit. When a sigma factor is associated with the core the holoenzyme is formed, which can initiate transcription. Requires Mg(2+) as cofactor. The cofactor is Zn(2+).

The catalysed reaction is RNA(n) + a ribonucleoside 5'-triphosphate = RNA(n+1) + diphosphate. Its function is as follows. DNA-dependent RNA polymerase catalyzes the transcription of DNA into RNA using the four ribonucleoside triphosphates as substrates. The polypeptide is DNA-directed RNA polymerase subunit beta' (Streptococcus agalactiae serotype Ia (strain ATCC 27591 / A909 / CDC SS700)).